We begin with the raw amino-acid sequence, 298 residues long: Probable tRNA(His) guanylyltransferase (298 aa).

3 residues coordinate Mg(2+): Asp58, Gly59, and Asp105. Residues 58–63 and 104–105 each bind GTP; these read DGRNFH and SD.

This sequence belongs to the tRNA(His) guanylyltransferase family. As to quaternary structure, homotetramer. Interacts with MFN1 and MFN2; functions as a guanyl-nucleotide exchange factor/GEF for MFN2 and also probably MFN1. The cofactor is Mg(2+).

The protein localises to the cytoplasm. The protein resides in the mitochondrion. The enzyme catalyses a 5'-end ribonucleotide-tRNA(His) + GTP + ATP + H2O = a 5'-end phospho-guanosine-ribonucleotide-tRNA(His) + AMP + 2 diphosphate + H(+). Its function is as follows. Adds a GMP to the 5'-end of tRNA(His) after transcription and RNase P cleavage. This step is essential for proper recognition of the tRNA and for the fidelity of protein synthesis. Also functions as a guanyl-nucleotide exchange factor/GEF for the MFN1 and MFN2 mitofusins thereby regulating mitochondrial fusion. By regulating both mitochondrial dynamics and bioenergetic function, it contributes to cell survival following oxidative stress. The protein is Probable tRNA(His) guanylyltransferase (Thg1l) of Mus musculus (Mouse).